A 295-amino-acid polypeptide reads, in one-letter code: uncharacterized protein (295 aa).

The signal sequence occupies residues 1–19 (MHKLLLIITVFSTFNVAQA).

This is an uncharacterized protein from Rickettsia typhi (strain ATCC VR-144 / Wilmington).